An 843-amino-acid chain; its full sequence is uncharacterized protein (843 aa).

The segment at residues 15 to 42 (CLRCKQRKIKCDKLWPTCSKCKASSSIC) is a DNA-binding region (zn(2)-C6 fungal-type).

The protein localises to the nucleus. Its function is as follows. Required for growth on non-fermentable carbon sources. This is an uncharacterized protein from Saccharomyces cerevisiae (strain ATCC 204508 / S288c) (Baker's yeast).